A 380-amino-acid polypeptide reads, in one-letter code: Cytochrome b (380 aa).

4 helical membrane passes run 34–54, 78–99, 114–134, and 179–199; these read FGSLLGICLTMQILTGLLLAT, WLIRNLHANGASFFFICIYLHI, WNTGVILLLTLMATAFVGYVL, and FFALHFLLPFAIAGLTLIHLT. The heme b site is built by His-84 and His-98. Residues His-183 and His-197 each contribute to the heme b site. Position 202 (His-202) interacts with a ubiquinone. The next 4 membrane-spanning stretches (helical) occupy residues 227–247, 289–309, 321–341, and 348–368; these read LKDILGLTLLLLPLTTLALFS, LGGVLALAASVLILFLCPLLH, LSQLLFWTLTANLLILTWVGS, and FIIIGQLASLTYFFTLLILFP.

The protein belongs to the cytochrome b family. As to quaternary structure, the cytochrome bc1 complex contains 11 subunits: 3 respiratory subunits (MT-CYB, CYC1 and UQCRFS1), 2 core proteins (UQCRC1 and UQCRC2) and 6 low-molecular weight proteins (UQCRH/QCR6, UQCRB/QCR7, UQCRQ/QCR8, UQCR10/QCR9, UQCR11/QCR10 and a cleavage product of UQCRFS1). This cytochrome bc1 complex then forms a dimer. Heme b serves as cofactor.

The protein localises to the mitochondrion inner membrane. Its function is as follows. Component of the ubiquinol-cytochrome c reductase complex (complex III or cytochrome b-c1 complex) that is part of the mitochondrial respiratory chain. The b-c1 complex mediates electron transfer from ubiquinol to cytochrome c. Contributes to the generation of a proton gradient across the mitochondrial membrane that is then used for ATP synthesis. This is Cytochrome b (MT-CYB) from Ciconia ciconia (White stork).